The primary structure comprises 529 residues: UDP-glycosyltransferase (529 aa).

2 N-linked (GlcNAc...) asparagine glycosylation sites follow: N70 and N420. Residues 504–524 (LDLYLVYIALFAVPVGAVRWI) form a helical membrane-spanning segment.

Belongs to the glycosyltransferase 28 family.

The protein resides in the membrane. It catalyses the reaction stromemycin aglycone + UDP-alpha-D-glucose = stromemycin + UDP + H(+). It participates in mycotoxin biosynthesis. Functionally, UDP-glycosyltransferase; part of the gene cluster that mediates the biosynthesis of stromemycin, a depside C-glucoside with two unsaturated C9 side chains belonging to aromatic polyketide glycosides. Acts as the tailoring enzyme responsible for 3-C-glucosylation of bininalkenylresorcylic acid to yield stromemycin. This chain is UDP-glycosyltransferase, found in Talaromyces amestolkiae.